A 280-amino-acid chain; its full sequence is 4-diphosphocytidyl-2-C-methyl-D-erythritol kinase (280 aa).

Residue K8 is part of the active site. ATP is bound at residue P91 to T101. D133 is an active-site residue.

Belongs to the GHMP kinase family. IspE subfamily.

The catalysed reaction is 4-CDP-2-C-methyl-D-erythritol + ATP = 4-CDP-2-C-methyl-D-erythritol 2-phosphate + ADP + H(+). It participates in isoprenoid biosynthesis; isopentenyl diphosphate biosynthesis via DXP pathway; isopentenyl diphosphate from 1-deoxy-D-xylulose 5-phosphate: step 3/6. Its function is as follows. Catalyzes the phosphorylation of the position 2 hydroxy group of 4-diphosphocytidyl-2C-methyl-D-erythritol. The polypeptide is 4-diphosphocytidyl-2-C-methyl-D-erythritol kinase (Clostridium botulinum (strain Alaska E43 / Type E3)).